The sequence spans 77 residues: NAD(P)H-quinone oxidoreductase subunit L (77 aa).

2 helical membrane passes run 12–32 (LIAY…LLFY) and 47–67 (LGIY…SPFL).

This sequence belongs to the complex I NdhL subunit family. As to quaternary structure, NDH-1 can be composed of about 15 different subunits; different subcomplexes with different compositions have been identified which probably have different functions.

The protein localises to the cellular thylakoid membrane. It carries out the reaction a plastoquinone + NADH + (n+1) H(+)(in) = a plastoquinol + NAD(+) + n H(+)(out). The catalysed reaction is a plastoquinone + NADPH + (n+1) H(+)(in) = a plastoquinol + NADP(+) + n H(+)(out). In terms of biological role, NDH-1 shuttles electrons from an unknown electron donor, via FMN and iron-sulfur (Fe-S) centers, to quinones in the respiratory and/or the photosynthetic chain. The immediate electron acceptor for the enzyme in this species is believed to be plastoquinone. Couples the redox reaction to proton translocation, and thus conserves the redox energy in a proton gradient. Cyanobacterial NDH-1 also plays a role in inorganic carbon-concentration. The sequence is that of NAD(P)H-quinone oxidoreductase subunit L from Prochlorococcus marinus (strain MIT 9312).